Consider the following 220-residue polypeptide: Protein-L-isoaspartate O-methyltransferase (220 aa).

Residue Ser-64 is part of the active site.

Belongs to the methyltransferase superfamily. L-isoaspartyl/D-aspartyl protein methyltransferase family.

Its subcellular location is the cytoplasm. The enzyme catalyses [protein]-L-isoaspartate + S-adenosyl-L-methionine = [protein]-L-isoaspartate alpha-methyl ester + S-adenosyl-L-homocysteine. Its function is as follows. Catalyzes the methyl esterification of L-isoaspartyl residues in peptides and proteins that result from spontaneous decomposition of normal L-aspartyl and L-asparaginyl residues. It plays a role in the repair and/or degradation of damaged proteins. The polypeptide is Protein-L-isoaspartate O-methyltransferase (Thermococcus onnurineus (strain NA1)).